We begin with the raw amino-acid sequence, 151 residues long: 3-hydroxyacyl-[acyl-carrier-protein] dehydratase FabZ (151 aa).

His-54 is a catalytic residue.

This sequence belongs to the thioester dehydratase family. FabZ subfamily.

Its subcellular location is the cytoplasm. The catalysed reaction is a (3R)-hydroxyacyl-[ACP] = a (2E)-enoyl-[ACP] + H2O. Functionally, involved in unsaturated fatty acids biosynthesis. Catalyzes the dehydration of short chain beta-hydroxyacyl-ACPs and long chain saturated and unsaturated beta-hydroxyacyl-ACPs. In Erwinia tasmaniensis (strain DSM 17950 / CFBP 7177 / CIP 109463 / NCPPB 4357 / Et1/99), this protein is 3-hydroxyacyl-[acyl-carrier-protein] dehydratase FabZ.